The following is a 477-amino-acid chain: Proton-coupled amino acid transporter 3 (477 aa).

Residues 1-54 (MGNVPLLREVGKCQRNMFGRSTASSKGSSNSRSSSSTSPKKGPRREADALMFIQ) lie on the Cytoplasmic side of the membrane. Residues 19–40 (GRSTASSKGSSNSRSSSSTSPK) show a composition bias toward low complexity. Residues 19–43 (GRSTASSKGSSNSRSSSSTSPKKGP) form a disordered region. A helical membrane pass occupies residues 55-75 (IFIHLLKSNIGTGFLGLPLAV). Topologically, residues 76 to 77 (KN) are extracellular. Residues 78–98 (AGLLVGPVSLLAIGALTVHCM) form a helical membrane-spanning segment. At 99 to 144 (DILLNCACHLTQRLQRSFVNYEETTMYSLETCPSPWLRTHSVWGRY) the chain is on the cytoplasmic side. A helical transmembrane segment spans residues 145–165 (VVSFLLIVTQLGFCSVYFMFL). Over 166 to 202 (ADNLQQIMEEAHFTSNVCQPRQSLVMTSILDTRFYML) the chain is Extracellular. Residues 203–223 (TILPFLILLVLIQNPQVLSIF) form a helical membrane-spanning segment. Residues 224–225 (ST) lie on the Cytoplasmic side of the membrane. Residues 226–246 (LATITTLSSLALIFEYLIQTP) traverse the membrane as a helical segment. The Extracellular portion of the chain corresponds to 247 to 259 (HHSNLPLVANWKT). A helical transmembrane segment spans residues 260-280 (FLLFFGTAIFTFEGVGMVLPL). The Cytoplasmic segment spans residues 281-291 (KSQMKSPQQFP). The chain crosses the membrane as a helical span at residues 292–312 (AVLYLGMSFVIFLYICLGTLG). At 313 to 344 (YMKFGTDTQASITLNLPICWLYQSVKLMYSVG) the chain is on the extracellular side. A helical membrane pass occupies residues 345 to 365 (IFFTYALQFHVPAEIIVPYVV). The Cytoplasmic segment spans residues 366-374 (SRVSENWAL). The helical transmembrane segment at 375–395 (FVDLTVRTALVCLTCFSAVLI) threads the bilayer. Residues 396–399 (PRLD) lie on the Extracellular side of the membrane. A helical transmembrane segment spans residues 400-420 (LVISLVGSVSSSALAIIIPPL). Residues 421–432 (LEIATFYSENIS) lie on the Cytoplasmic side of the membrane. Residues 433–453 (CATIVKDIMISILGLLGCVLG) form a helical membrane-spanning segment. Topologically, residues 454-477 (TYQALYEMTQQTHFYMANSTRVHI) are extracellular.

Belongs to the amino acid/polyamine transporter 2 family. Specifically expressed in testis.

It is found in the membrane. This Mus musculus (Mouse) protein is Proton-coupled amino acid transporter 3 (Slc36a3).